Here is a 172-residue protein sequence, read N- to C-terminus: 3-phenylpropionate/cinnamic acid dioxygenase subunit beta (172 aa).

It belongs to the bacterial ring-hydroxylating dioxygenase beta subunit family. In terms of assembly, this dioxygenase system consists of four proteins: the two subunits of the hydroxylase component (HcaE and HcaF), a ferredoxin (HcaC) and a ferredoxin reductase (HcaD).

The catalysed reaction is 3-phenylpropanoate + NADH + O2 + H(+) = 3-(cis-5,6-dihydroxycyclohexa-1,3-dien-1-yl)propanoate + NAD(+). It carries out the reaction (E)-cinnamate + NADH + O2 + H(+) = (2E)-3-(cis-5,6-dihydroxycyclohexa-1,3-dien-1-yl)prop-2-enoate + NAD(+). Its pathway is aromatic compound metabolism; 3-phenylpropanoate degradation. Part of the multicomponent 3-phenylpropionate dioxygenase. Converts 3-phenylpropionic acid (PP) and cinnamic acid (CI) into 3-phenylpropionate-dihydrodiol (PP-dihydrodiol) and cinnamic acid-dihydrodiol (CI-dihydrodiol), respectively. The polypeptide is 3-phenylpropionate/cinnamic acid dioxygenase subunit beta (Escherichia coli O157:H7).